The sequence spans 205 residues: Small ribosomal subunit protein uS4 (205 aa).

The S4 RNA-binding domain maps to 94–157; it reads SRLDTVVYRM…QQIPLIQESI (64 aa).

Belongs to the universal ribosomal protein uS4 family. As to quaternary structure, part of the 30S ribosomal subunit. Contacts protein S5. The interaction surface between S4 and S5 is involved in control of translational fidelity.

Functionally, one of the primary rRNA binding proteins, it binds directly to 16S rRNA where it nucleates assembly of the body of the 30S subunit. In terms of biological role, with S5 and S12 plays an important role in translational accuracy. This chain is Small ribosomal subunit protein uS4, found in Rickettsia typhi (strain ATCC VR-144 / Wilmington).